The chain runs to 434 residues: Nuclear distribution protein PAC1 (434 aa).

The LisH domain occupies 8 to 40 (QKDDLHKAMLDYLYANNHTAAFNALKESAGITY). Residues 57-83 (TSVIRLQKKIMELENRNAALQEELSMS) adopt a coiled-coil conformation. WD repeat units lie at residues 106 to 147 (GHRA…RTLK), 149 to 187 (HTKP…KNTK), 191 to 230 (GHDH…QVRT), 233 to 272 (GHSE…PKSE), 275 to 334 (GHEN…MIRN), 337 to 378 (GHDN…RIVE), and 401 to 434 (KKVN…IWLP).

Belongs to the WD repeat LIS1/nudF family. As to quaternary structure, self-associates. Interacts with NDL1 and dynein.

It localises to the cytoplasm. The protein resides in the cytoskeleton. It is found in the spindle pole. Functionally, positively regulates the activity of the minus-end directed microtubule motor protein dynein. May enhance dynein-mediated microtubule sliding by targeting dynein to the microtubule plus end. Required for nuclear migration during vegetative growth as well as development. Required for retrograde early endosome (EE) transport from the hyphal tip. Required for localization of dynein to the mitotic spindle poles. Recruits additional proteins to the dynein complex at SPBs. This is Nuclear distribution protein PAC1 from Coprinopsis cinerea (strain Okayama-7 / 130 / ATCC MYA-4618 / FGSC 9003) (Inky cap fungus).